The primary structure comprises 89 residues: Small ribosomal subunit protein uS15 (89 aa).

This sequence belongs to the universal ribosomal protein uS15 family. In terms of assembly, part of the 30S ribosomal subunit. Forms a bridge to the 50S subunit in the 70S ribosome, contacting the 23S rRNA.

Its function is as follows. One of the primary rRNA binding proteins, it binds directly to 16S rRNA where it helps nucleate assembly of the platform of the 30S subunit by binding and bridging several RNA helices of the 16S rRNA. Functionally, forms an intersubunit bridge (bridge B4) with the 23S rRNA of the 50S subunit in the ribosome. In Buchnera aphidicola subsp. Baizongia pistaciae (strain Bp), this protein is Small ribosomal subunit protein uS15.